The sequence spans 214 residues: Histone H1.1 (214 aa).

A disordered region spans residues 1–43 (MSETAPVPQPASVAPEKPAATKKTRKPAKAAVPRKKPAGPSVS). Residue Ser2 is modified to N-acetylserine. Residues Ser2 and Ser12 each carry the phosphoserine modification. Lys17 is subject to N6-acetyllysine. A compositionally biased stretch (basic residues) spans 20–37 (ATKKTRKPAKAAVPRKKP). Lys36 is modified (N6-(beta-hydroxybutyryl)lysine). Residues 38 to 111 (AGPSVSELIV…GAAGSFKLNK (74 aa)) form the H15 domain. The residue at position 43 (Ser43) is a Phosphoserine. The residue at position 54 (Lys54) is an N6-(beta-hydroxybutyryl)lysine. Arg56 is modified (citrulline). Lys66 bears the N6-(beta-hydroxybutyryl)lysine mark. Ser67 bears the Phosphoserine mark. At Lys77 the chain carries N6-acetyllysine. Lys87 bears the N6-(beta-hydroxybutyryl)lysine mark. Lys92 is subject to N6-(beta-hydroxybutyryl)lysine; alternate. Lys92 is modified (N6-acetyllysine; alternate). Positions 93–214 (GTLVQTKGTG…KPKKAAPKKK (122 aa)) are disordered. The residue at position 106 (Ser106) is a Phosphoserine. N6-(beta-hydroxybutyryl)lysine is present on Lys108. Over residues 116–144 (KASTTKVTVKAKASGAAKKPKKTAGAAAK) the composition is skewed to low complexity. The residue at position 121 (Lys121) is an N6-acetyllysine. Composition is skewed to basic residues over residues 145-179 (KTVK…KKVA) and 186-214 (KAVK…PKKK). Residue Thr202 is modified to Phosphothreonine.

This sequence belongs to the histone H1/H5 family. In terms of assembly, interacts with DFFB. Post-translationally, H1 histones are progressively phosphorylated during the cell cycle, becoming maximally phosphorylated during late G2 phase and M phase, and being dephosphorylated sharply thereafter. Citrullination at Arg-56 (H1R54ci) by PADI4 takes place within the DNA-binding site of H1 and results in its displacement from chromatin and global chromatin decondensation, thereby promoting pluripotency and stem cell maintenance.

The protein resides in the nucleus. The protein localises to the chromosome. In terms of biological role, H1 histones bind to linker DNA between nucleosomes forming the macromolecular structure known as the chromatin fiber. H1 histones are necessary for the condensation of nucleosome chains into higher-order structured fibers. Also acts as a regulator of individual gene transcription through chromatin remodeling. In Rattus norvegicus (Rat), this protein is Histone H1.1.